The primary structure comprises 353 residues: C2 calcium-dependent domain-containing protein 4D (353 aa).

A disordered region spans residues Cys135 to Thr191. The segment covering Ser140 to Pro150 has biased composition (low complexity). The region spanning Arg217–Gly343 is the C2 domain.

This is C2 calcium-dependent domain-containing protein 4D (C2CD4D) from Homo sapiens (Human).